The chain runs to 1354 residues: High molecular weight rhoptry protein 2 (1354 aa).

The N-terminal stretch at 1–20 is a signal peptide; sequence MVKLSGIILLSLVWLKLNNS. Cystine bridges form between cysteine 50–cysteine 75 and cysteine 220–cysteine 227. The chain crosses the membrane as a helical span at residues 716-736; sequence LIFAAYMLTLVFFIESQIDIS. Cystine bridges form between cysteine 768–cysteine 828, cysteine 848–cysteine 889, and cysteine 924–cysteine 1011.

As to quaternary structure, component of the RhopH complex. RhopH complex is composed of CLAG3.1/CLAG3.2, RhopH2 and RhopH3 with a 1:1:1 subunit stoichiometry. Interacts with CLAG3.1/CLAG3.2.

It localises to the host cell membrane. It is found in the parasitophorous vacuole membrane. The protein resides in the host cytoplasm. Its subcellular location is the cytoplasm. The protein localises to the cytoplasmic vesicle. It localises to the secretory vesicle. It is found in the rhoptry. Functionally, participates in the formation of new permeability pathways in Plasmodium-infected erythrocytes enabling the uptake of nutrients from the blood plasma. Required for maintaining invasion capacity of merozoites. Required for parasite growth and proliferation. This is High molecular weight rhoptry protein 2 from Plasmodium berghei (strain Anka).